The chain runs to 431 residues: Ribosomal RNA small subunit methyltransferase B (431 aa).

S-adenosyl-L-methionine is bound by residues 254–260 (CAAPGGK), D277, D303, and D322. The Nucleophile role is filled by C375.

It belongs to the class I-like SAM-binding methyltransferase superfamily. RsmB/NOP family.

The protein resides in the cytoplasm. It carries out the reaction cytidine(967) in 16S rRNA + S-adenosyl-L-methionine = 5-methylcytidine(967) in 16S rRNA + S-adenosyl-L-homocysteine + H(+). Its function is as follows. Specifically methylates the cytosine at position 967 (m5C967) of 16S rRNA. The chain is Ribosomal RNA small subunit methyltransferase B from Klebsiella pneumoniae subsp. pneumoniae (strain ATCC 700721 / MGH 78578).